A 283-amino-acid polypeptide reads, in one-letter code: MWKFVIGSVSTAAFFVSVCTIYFSVSMLDELDSFRLSIRDELEDWKEVSDDTWQRLNDMTSRNVPKKTNILKEFVRGKRNVGNDQCNCAEPTKNCPAGPPGEKGSLGNPGQPGPDGVDGDNGVDGDVVIHDMPNPKECIKCPAGPPGPPGPPGPLGPRGDKGPSGPRGALGDQGETGPVGEIGDQGPPGSAGRAGPRGQAGQPGTIAIVGLAGRPGPQGPLGEPGAQGEPGVDGKDGALGAPGRKAENGRPGKRGKDGVAGVPGTRGKEGEDAGYCTCPPRTA.

The first 19 residues, 1–19, serve as a signal peptide directing secretion; the sequence is MWKFVIGSVSTAAFFVSVC. Residues 90–283 are disordered; the sequence is EPTKNCPAGP…GYCTCPPRTA (194 aa). Residues 127–139 show a composition bias toward basic and acidic residues; sequence VVIHDMPNPKECI. Positions 143-155 are enriched in pro residues; sequence AGPPGPPGPPGPL. Residues 185-204 are compositionally biased toward low complexity; the sequence is QGPPGSAGRAGPRGQAGQPG. One can recognise a Collagen-like domain in the interval 213–271; that stretch reads GRPGPQGPLGEPGAQGEPGVDGKDGALGAPGRKAENGRPGKRGKDGVAGVPGTRGKEGE. Basic and acidic residues predominate over residues 244-257; it reads RKAENGRPGKRGKD.

This sequence belongs to the cuticular collagen family. In terms of assembly, collagen polypeptide chains are complexed within the cuticle by disulfide bonds and other types of covalent cross-links.

In terms of biological role, probable cuticular collagen-like protein. Nematode cuticles are composed largely of collagen-like proteins. The cuticle functions both as an exoskeleton and as a barrier to protect the worm from its environment. Acts downstream of the Wnt signaling pathway, perhaps in the formation of the adult cuticle. The protein is Cuticle collagen 49 of Caenorhabditis elegans.